The chain runs to 603 residues: Coagulation factor XII (603 aa).

An N-terminal signal peptide occupies residues 1 to 18 (GRLLLGSLLVSLESALSA). Positions 41–89 (VTGEPCYFPFQYNRQLYHHCIHKGRPGPRPWCATTPNFDQDQQWAYCLE) constitute a Fibronectin type-II domain. 20 disulfides stabilise this stretch: C46/C72, C60/C87, C97/C109, C103/C118, C120/C129, C134/C162, C160/C169, C177/C188, C182/C197, C199/C208, C216/C294, C237/C276, C265/C289, C345/C472, C383/C399, C391/C461, C422/C425, C488/C557, C520/C536, and C547/C578. The 38-residue stretch at 93 to 130 (VKDHCSKHNPCQRGGICVNTLSSPHCLCPDHLTGKHCQ) folds into the EGF-like 1 domain. A Fibronectin type-I domain is found at 132–172 (EKCFEPQLHRFFHENEIWFRTGPAGVAKCHCKGPDAHCKQM). An EGF-like 2 domain is found at 173-209 (HSQECQTNPCLNGGRCLEVEGHHLCDCPMGYTGPFCD). The region spanning 216–294 (CYEGRGVSYR…SWEYCDLAQC (79 aa)) is the Kringle domain. N248 and N270 each carry an N-linked (GlcNAc...) asparagine glycan. One can recognise a Peptidase S1 domain in the interval 359–602 (IVGGLVALPG…YLTWIQKHTA (244 aa)). Catalysis depends on H398, which acts as the Charge relay system. N419 is a glycosylation site (N-linked (GlcNAc...) asparagine). D447 acts as the Charge relay system in catalysis. The Charge relay system role is filled by S551.

It belongs to the peptidase S1 family. Interacts with HRG; the interaction, which is enhanced in the presence of zinc ions and inhibited by heparin-binding, inhibits factor XII autoactivation and contact-initiated coagulation. In terms of processing, O- and N-glycosylated.

It localises to the secreted. The catalysed reaction is Selective cleavage of Arg-|-Ile bonds in factor VII to form factor VIIa and factor XI to form factor XIa.. Its activity is regulated as follows. Activity is promoted in the presence of negatively charged surfaces. Its function is as follows. Factor XII is a serum glycoprotein that participates in the initiation of blood coagulation, fibrinolysis, and the generation of bradykinin and angiotensin. Prekallikrein is cleaved by factor XII to form kallikrein, which then cleaves factor XII first to alpha-factor XIIa and then trypsin cleaves it to beta-factor XIIa. Alpha-factor XIIa activates factor XI to factor XIa. In Cavia porcellus (Guinea pig), this protein is Coagulation factor XII (F12).